We begin with the raw amino-acid sequence, 185 residues long: Shikimate kinase (185 aa).

15-20 (GAGKST) is a binding site for ATP. A Mg(2+)-binding site is contributed by serine 19. 3 residues coordinate substrate: aspartate 37, arginine 61, and glycine 83. Position 121 (arginine 121) interacts with ATP. Arginine 146 contributes to the substrate binding site.

This sequence belongs to the shikimate kinase family. As to quaternary structure, monomer. Mg(2+) serves as cofactor.

It localises to the cytoplasm. It carries out the reaction shikimate + ATP = 3-phosphoshikimate + ADP + H(+). Its pathway is metabolic intermediate biosynthesis; chorismate biosynthesis; chorismate from D-erythrose 4-phosphate and phosphoenolpyruvate: step 5/7. Its function is as follows. Catalyzes the specific phosphorylation of the 3-hydroxyl group of shikimic acid using ATP as a cosubstrate. The chain is Shikimate kinase from Blochmanniella floridana.